A 656-amino-acid polypeptide reads, in one-letter code: MYLTLIILPLLGSIVSGFFGRKVGVKGAHLITCVSVITTTFLAILAFFEVGFNNIPVTINVARWVDVESLYVLWNFRFDSLTVSMFITVLIVSSLVHIYSISYMSHDPHNQRFFSYLSLFTFMMIILVTGNNYLIMFVGWEGVGVCSYLLVNFWFTRIAANQSSLSALLTNREGDTLLTVGMFAILWSFGNIDYSTVFALAPYYNENIITIIGICLLIGATAKSSQVGLHIWLPQAMEGPTPVSALIHAATMVTAGVYLLMRSSPLIEYSSTVLVLCLWLGAITTVFSSLIGLFQQDIKKVIAYSTMSQLGMMVIAVGLSSYNLALFHLVNHAFYKALLFLGAGSVIHAVADNQDFRKYGGLREFLPLTYSVMLIASLSLVAVPFMTGFYSKDFILESAYGQYYLSSTIVYFVATIGAMFTTLYSAKVLYLTFLTNPNGPLVNYKHAHEGDLFMTIPLIILAIFSIFFGYLTKDIFIGLGTGFFTDNSLFIHPSHEIMLDTEFAVPTFFKLLPFVFTVSLSLLSVLLSEFLPKLLINFKFSRLGYNIFSFFNQRFYIELFYNKYIVEGVLKLGGQTSKNLNKGPVKLLGPYGLEKGGLALSNSLGNLSTGIVTTYALYILIGLIFDISLLYFSYNDNNLLILIIFTLFALLNSNKK.

17 helical membrane-spanning segments follow: residues 4–21 (TLII…FFGR), 28–50 (AHLI…FFEV), 81–103 (LTVS…SISY), 112–129 (RFFS…ILVT), 133–155 (YLIM…NFWF), 176–198 (TLLT…STVF), 208–230 (IITI…VGLH), 243–262 (VSAL…LLMR), 272–294 (TVLV…IGLF), 301–319 (VIAY…AVGL), 329–351 (LVNH…HAVA), 364–386 (EFLP…VPFM), 409–431 (IVYF…VLYL), 452–471 (LFMT…FGYL), 514–536 (FVFT…KLLI), 603–625 (SLGN…GLIF), and 629–651 (LLYF…FALL).

This sequence belongs to the complex I subunit 5 family.

The protein resides in the mitochondrion inner membrane. It catalyses the reaction a ubiquinone + NADH + 5 H(+)(in) = a ubiquinol + NAD(+) + 4 H(+)(out). Core subunit of the mitochondrial membrane respiratory chain NADH dehydrogenase (Complex I) that is believed to belong to the minimal assembly required for catalysis. Complex I functions in the transfer of electrons from NADH to the respiratory chain. The immediate electron acceptor for the enzyme is believed to be ubiquinone. This chain is NADH-ubiquinone oxidoreductase chain 5 (nad5), found in Aspergillus niger.